The following is a 212-amino-acid chain: MSQLGNICHADYMSTSTESQERSLNNPNDTHPEIVNVVSTFQLGVKLELRKIVQKARNAEYNPKRFAGAIMRISSPKSTALIFQTGKIVCTGTRSIEESKIASKKYAKIIKKIGYPIHYSNFNVQNIVGSCDVKFQIALRTLVDSYLAFCQYEPEVFPGLVYRMASPKVTLLVFSTGKVVLTGAKDEESLNLAYKNIYPILLANRKEDISNQ.

Tandem repeats lie at residues 30-114 (THPE…KKIG) and 120-201 (SNFN…YPIL).

This sequence belongs to the TBP family. In terms of assembly, belongs to the TFIID complex together with the TBP-associated factors (TAFs). Binds DNA as monomer.

It localises to the nucleus. Functionally, general transcription factor that functions at the core of the DNA-binding multiprotein factor TFIID. Binding of TFIID to the TATA box is the initial transcriptional step of the pre-initiation complex (PIC), playing a role in the activation of eukaryotic genes transcribed by RNA polymerase II. This is TATA-box-binding protein 2 from Entamoeba histolytica (strain ATCC 30459 / HM-1:IMSS / ABRM).